Consider the following 352-residue polypeptide: Phosphate acyltransferase (352 aa).

Belongs to the PlsX family. In terms of assembly, homodimer. Probably interacts with PlsY.

The protein resides in the cytoplasm. It carries out the reaction a fatty acyl-[ACP] + phosphate = an acyl phosphate + holo-[ACP]. It participates in lipid metabolism; phospholipid metabolism. Catalyzes the reversible formation of acyl-phosphate (acyl-PO(4)) from acyl-[acyl-carrier-protein] (acyl-ACP). This enzyme utilizes acyl-ACP as fatty acyl donor, but not acyl-CoA. In Bordetella bronchiseptica (strain ATCC BAA-588 / NCTC 13252 / RB50) (Alcaligenes bronchisepticus), this protein is Phosphate acyltransferase.